A 453-amino-acid polypeptide reads, in one-letter code: Pup--protein ligase (453 aa).

E9 contacts Mg(2+). Residue R53 participates in ATP binding. Y55 is a binding site for Mg(2+). The Proton acceptor role is filled by D57. E63 serves as a coordination point for Mg(2+). T66 and W420 together coordinate ATP.

It belongs to the Pup ligase/Pup deamidase family. Pup-conjugating enzyme subfamily.

The catalysed reaction is ATP + [prokaryotic ubiquitin-like protein]-L-glutamate + [protein]-L-lysine = ADP + phosphate + N(6)-([prokaryotic ubiquitin-like protein]-gamma-L-glutamyl)-[protein]-L-lysine.. Its pathway is protein degradation; proteasomal Pup-dependent pathway. It participates in protein modification; protein pupylation. In terms of biological role, catalyzes the covalent attachment of the prokaryotic ubiquitin-like protein modifier Pup to the proteasomal substrate proteins, thereby targeting them for proteasomal degradation. This tagging system is termed pupylation. The ligation reaction involves the side-chain carboxylate of the C-terminal glutamate of Pup and the side-chain amino group of a substrate lysine. This chain is Pup--protein ligase, found in Nocardioides sp. (strain ATCC BAA-499 / JS614).